Here is a 352-residue protein sequence, read N- to C-terminus: Heat-inducible transcription repressor HrcA (352 aa).

Belongs to the HrcA family.

Negative regulator of class I heat shock genes (grpE-dnaK-dnaJ and groELS operons). Prevents heat-shock induction of these operons. This is Heat-inducible transcription repressor HrcA from Latilactobacillus sakei (Lactobacillus sakei).